The sequence spans 251 residues: DNA repair protein RecO (251 aa).

It belongs to the RecO family.

Its function is as follows. Involved in DNA repair and RecF pathway recombination. This Lactococcus lactis subsp. cremoris (strain SK11) protein is DNA repair protein RecO.